A 549-amino-acid polypeptide reads, in one-letter code: MGMFCNQCEQAAKGVGCDIIGVCGKNPEVAALQDLMLYGLKGLAIYADKARELGVKEEKIDYFVLEGLFTTVTNVDFDPVQIAGKLRTCYDYKERIKALYETAYREKNGSSAPQITAGPAAWVIAGDLEGLVKQGQEHGINTHHADADIRSAIEILIYGLKGMAAYADHAYILGKKDEEVFAFFHKAMAATADPAKGLMDFVGLAMECGKLNIKVMGMLNEGHVAHYGHPVPTKVPTGTRKNKGILVSGHDLRMLEELLKQTDGKGIDVYPHGEMLPAHGYPGLKKYAHLYGNFGGAWQDQAKEFPHFPGAIIFNTNCIQRPADSYKDRLFSWGQVGWPGVKHINGWDFSEVINKALECPELADAPAKEILTGFGHNAVLGVADKVIEGVKAGAIKHFFLIGGCDGAKPGRNYYTELAEKVPQDCVILTLACGKYRFNKLEFGDIGGIPRLLDIGQCNDAYSALQIALALADAFKCGVNDLPLSMILSWYEQKAVVILLSLLHLGIKNIKIGPSLPAFVTPNVLNFLVENFNLGPITTVDADLKAALGQ.

[4Fe-4S] cluster is bound by residues cysteine 5, cysteine 8, cysteine 17, and cysteine 23. Hybrid [4Fe-2O-2S] cluster contacts are provided by histidine 250, glutamate 274, cysteine 318, cysteine 404, cysteine 432, cysteine 457, glutamate 491, and lysine 493. Cysteine persulfide is present on cysteine 404.

This sequence belongs to the HCP family. [4Fe-4S] cluster serves as cofactor. Hybrid [4Fe-2O-2S] cluster is required as a cofactor.

Its subcellular location is the cytoplasm. It carries out the reaction A + NH4(+) + H2O = hydroxylamine + AH2 + H(+). In terms of biological role, catalyzes the reduction of hydroxylamine to form NH(3) and H(2)O. The sequence is that of Hydroxylamine reductase from Geobacter metallireducens (strain ATCC 53774 / DSM 7210 / GS-15).